A 404-amino-acid chain; its full sequence is uncharacterized protein (404 aa).

Residues Cys69, Cys75, Cys78, and Cys166 each coordinate [4Fe-4S] cluster. Gln226, Tyr253, Glu274, and Asp334 together coordinate S-adenosyl-L-methionine. Residue Cys361 is the Nucleophile of the active site.

This sequence belongs to the class I-like SAM-binding methyltransferase superfamily. RNA M5U methyltransferase family.

This is an uncharacterized protein from Treponema denticola (strain ATCC 35405 / DSM 14222 / CIP 103919 / JCM 8153 / KCTC 15104).